The chain runs to 387 residues: Flap endonuclease 1 (387 aa).

The segment at 1 to 104 is N-domain; the sequence is MGILGLSKLI…GELAKRAERR (104 aa). Position 34 (Asp34) interacts with Mg(2+). DNA contacts are provided by Arg47 and Arg70. Asp86, Glu158, Glu160, Asp179, and Asp181 together coordinate Mg(2+). The I-domain stretch occupies residues 122 to 253; it reads GIEKFNRRLV…KRAIELINNY (132 aa). Glu158 is a binding site for DNA. Positions 231 and 233 each coordinate DNA. Residue Asp233 coordinates Mg(2+). Residues 336–344 form an interaction with PCNA region; that stretch reads TQVRLDSFF. Positions 346 to 387 are disordered; that stretch reads TLPSTPNATNAAKRKAEEAKKSANNKKAKTSGGVGGRGRRPK.

The protein belongs to the XPG/RAD2 endonuclease family. FEN1 subfamily. As to quaternary structure, interacts with PCNA. Three molecules of FEN1 bind to one PCNA trimer with each molecule binding to one PCNA monomer. PCNA stimulates the nuclease activity without altering cleavage specificity. Mg(2+) is required as a cofactor. Post-translationally, phosphorylated. Phosphorylation upon DNA damage induces relocalization to the nuclear plasma.

The protein resides in the nucleus. Its subcellular location is the nucleolus. The protein localises to the nucleoplasm. It is found in the mitochondrion. Its function is as follows. Structure-specific nuclease with 5'-flap endonuclease and 5'-3' exonuclease activities involved in DNA replication and repair. During DNA replication, cleaves the 5'-overhanging flap structure that is generated by displacement synthesis when DNA polymerase encounters the 5'-end of a downstream Okazaki fragment. It enters the flap from the 5'-end and then tracks to cleave the flap base, leaving a nick for ligation. Also involved in the long patch base excision repair (LP-BER) pathway, by cleaving within the apurinic/apyrimidinic (AP) site-terminated flap. Acts as a genome stabilization factor that prevents flaps from equilibrating into structures that lead to duplications and deletions. Also possesses 5'-3' exonuclease activity on nicked or gapped double-stranded DNA, and exhibits RNase H activity. Also involved in replication and repair of rDNA and in repairing mitochondrial DNA. The protein is Flap endonuclease 1 of Drosophila erecta (Fruit fly).